Reading from the N-terminus, the 73-residue chain is Putative membrane protein insertion efficiency factor (73 aa).

It belongs to the UPF0161 family.

The protein localises to the cell inner membrane. Functionally, could be involved in insertion of integral membrane proteins into the membrane. The protein is Putative membrane protein insertion efficiency factor of Neisseria meningitidis serogroup C / serotype 2a (strain ATCC 700532 / DSM 15464 / FAM18).